The chain runs to 209 residues: Pyridoxine/pyridoxamine 5'-phosphate oxidase (209 aa).

Substrate is bound by residues 7–10 (REDY) and K64. FMN-binding positions include 59–64 (RIVLLK), 74–75 (FT), R80, and K81. Residues Y121, R125, and S129 each contribute to the substrate site. Residues 138 to 139 (QS) and W182 each bind FMN. 188–190 (RLH) is a binding site for substrate. R192 is a binding site for FMN.

It belongs to the pyridoxamine 5'-phosphate oxidase family. Homodimer. FMN is required as a cofactor.

It carries out the reaction pyridoxamine 5'-phosphate + O2 + H2O = pyridoxal 5'-phosphate + H2O2 + NH4(+). It catalyses the reaction pyridoxine 5'-phosphate + O2 = pyridoxal 5'-phosphate + H2O2. It participates in cofactor metabolism; pyridoxal 5'-phosphate salvage; pyridoxal 5'-phosphate from pyridoxamine 5'-phosphate: step 1/1. It functions in the pathway cofactor metabolism; pyridoxal 5'-phosphate salvage; pyridoxal 5'-phosphate from pyridoxine 5'-phosphate: step 1/1. Catalyzes the oxidation of either pyridoxine 5'-phosphate (PNP) or pyridoxamine 5'-phosphate (PMP) into pyridoxal 5'-phosphate (PLP). The chain is Pyridoxine/pyridoxamine 5'-phosphate oxidase from Actinobacillus pleuropneumoniae serotype 3 (strain JL03).